Consider the following 140-residue polypeptide: Nucleoside diphosphate kinase (140 aa).

The ATP site is built by K11, F59, R87, T93, R104, and N114. Residue H117 is the Pros-phosphohistidine intermediate of the active site.

Belongs to the NDK family. Homotetramer. Mg(2+) is required as a cofactor.

The protein resides in the cytoplasm. The enzyme catalyses a 2'-deoxyribonucleoside 5'-diphosphate + ATP = a 2'-deoxyribonucleoside 5'-triphosphate + ADP. It carries out the reaction a ribonucleoside 5'-diphosphate + ATP = a ribonucleoside 5'-triphosphate + ADP. Functionally, major role in the synthesis of nucleoside triphosphates other than ATP. The ATP gamma phosphate is transferred to the NDP beta phosphate via a ping-pong mechanism, using a phosphorylated active-site intermediate. This chain is Nucleoside diphosphate kinase, found in Francisella philomiragia subsp. philomiragia (strain ATCC 25017 / CCUG 19701 / FSC 153 / O#319-036).